A 165-amino-acid polypeptide reads, in one-letter code: Phosphopantetheine adenylyltransferase (165 aa).

Thr-9 serves as a coordination point for substrate. ATP-binding positions include 9–10 (TF) and His-17. 3 residues coordinate substrate: Lys-41, Leu-78, and Arg-92. Residues 93-95 (GLR), Glu-103, and 128-134 (HQAIASK) each bind ATP.

This sequence belongs to the bacterial CoaD family. Homohexamer. The cofactor is Mg(2+).

The protein resides in the cytoplasm. The catalysed reaction is (R)-4'-phosphopantetheine + ATP + H(+) = 3'-dephospho-CoA + diphosphate. It participates in cofactor biosynthesis; coenzyme A biosynthesis; CoA from (R)-pantothenate: step 4/5. In terms of biological role, reversibly transfers an adenylyl group from ATP to 4'-phosphopantetheine, yielding dephospho-CoA (dPCoA) and pyrophosphate. This is Phosphopantetheine adenylyltransferase from Ruegeria sp. (strain TM1040) (Silicibacter sp.).